The sequence spans 481 residues: UDP-glycosyltransferase 88F3 (481 aa).

UDP-alpha-D-glucose contacts are provided by residues serine 288, 357–358 (WA), 375–383 (HCGWNSVLE), and 397–400 (YAEQ).

It belongs to the UDP-glycosyltransferase family.

In terms of biological role, glycosyltransferase that may possess chalcone and dihydrochalcone 2'-O-glucosyltransferase activity. The polypeptide is UDP-glycosyltransferase 88F3 (Pyrus communis (Pear)).